The chain runs to 618 residues: Dihydroxy-acid dehydratase (618 aa).

Asp81 is a binding site for Mg(2+). Cys122 is a binding site for [2Fe-2S] cluster. Mg(2+) is bound by residues Asp123 and Lys124. Lys124 carries the N6-carboxylysine modification. Cys199 contributes to the [2Fe-2S] cluster binding site. Glu495 contributes to the Mg(2+) binding site. The Proton acceptor role is filled by Ser521.

Belongs to the IlvD/Edd family. As to quaternary structure, homodimer. [2Fe-2S] cluster is required as a cofactor. Requires Mg(2+) as cofactor.

It carries out the reaction (2R)-2,3-dihydroxy-3-methylbutanoate = 3-methyl-2-oxobutanoate + H2O. The catalysed reaction is (2R,3R)-2,3-dihydroxy-3-methylpentanoate = (S)-3-methyl-2-oxopentanoate + H2O. The protein operates within amino-acid biosynthesis; L-isoleucine biosynthesis; L-isoleucine from 2-oxobutanoate: step 3/4. It functions in the pathway amino-acid biosynthesis; L-valine biosynthesis; L-valine from pyruvate: step 3/4. Functions in the biosynthesis of branched-chain amino acids. Catalyzes the dehydration of (2R,3R)-2,3-dihydroxy-3-methylpentanoate (2,3-dihydroxy-3-methylvalerate) into 2-oxo-3-methylpentanoate (2-oxo-3-methylvalerate) and of (2R)-2,3-dihydroxy-3-methylbutanoate (2,3-dihydroxyisovalerate) into 2-oxo-3-methylbutanoate (2-oxoisovalerate), the penultimate precursor to L-isoleucine and L-valine, respectively. This Blochmanniella floridana protein is Dihydroxy-acid dehydratase.